A 570-amino-acid polypeptide reads, in one-letter code: MNVVFAVKQYISKMIEDSGPGMKVLLMDKETTGIVSMVYTQSEILQKEVYLFERIDSQNREIMKHLKAICFLRPTKENVDYIIQELRRPKYTIYFIYFSNVISKSDVKSLAEADEQEVVAEVQEFYGDYIAVNPHLFSLNILGCCQGRNWDPAQLSRTTQGLTALLLSLKKCPMIRYQLSSEAAKRLAECVKQVITKEYELFEFRRTEVPPLLLILDRCDDAITPLLNQWTYQAMVHELLGINNNRIDLSRVPGISKDLREVVLSAENDEFYANNMYLNFAEIGSNIKNLMEDFQKKKPKEQQKLESIADMKAFVENYPQFKKMSGTVSKHVTVVGELSRLVSERNLLEVSEVEQELACQNDHSSALQNIKRLLQNPKVTEFDAARLVMLYALHYERHSSNSLPGLMMDLRNKGVSEKYRKLVSAVVEYGGKRVRGSDLFSPKDAVAITKQFLKGLKGVENVYTQHQPFLHETLDHLIKGRLKENLYPYLGPSTLRDRPQDIIVFVIGGATYEEALTVYNLNRTTPGVRIVLGGTTVHNTKSFLEEVLASGLHSRSKESSQVTSRSASRR.

Phosphoserine occurs at positions 307 and 441.

Belongs to the STXBP/unc-18/SEC1 family. In terms of assembly, interacts with STX6. Interacts with ZFYVE20. Ubiquitous. Expression was highest in testis, heart and brain, intermediate in kidney, spleen, prostate, ovary, small intestine and thymus and low in lung, skeletal muscle, placenta, colon, pancreas, peripheral blood leukocytes and liver.

It is found in the golgi apparatus membrane. It localises to the endosome membrane. Functionally, may play a role in vesicle-mediated protein trafficking from the Golgi stack through the trans-Golgi network. This Homo sapiens (Human) protein is Vacuolar protein sorting-associated protein 45 (VPS45).